We begin with the raw amino-acid sequence, 109 residues long: Cell division protein ZapA (109 aa).

Residues P21–R99 adopt a coiled-coil conformation.

This sequence belongs to the ZapA family. Type 1 subfamily. In terms of assembly, homodimer. Interacts with FtsZ.

It is found in the cytoplasm. Activator of cell division through the inhibition of FtsZ GTPase activity, therefore promoting FtsZ assembly into bundles of protofilaments necessary for the formation of the division Z ring. It is recruited early at mid-cell but it is not essential for cell division. The polypeptide is Cell division protein ZapA (Klebsiella pneumoniae subsp. pneumoniae (strain ATCC 700721 / MGH 78578)).